A 609-amino-acid chain; its full sequence is Hemagglutinin/proteinase (609 aa).

Residues 1–24 (MKMIQRPLNWLVLAGAATGFPLYA) form the signal peptide. Residues 25–196 (AQMVTIDDAS…LDQWDGINHA (172 aa)) constitute a propeptide that is removed on maturation. H343 serves as a coordination point for Zn(2+). The active site involves E344. Zn(2+)-binding residues include H347 and E367. H426 acts as the Proton donor in catalysis.

It belongs to the peptidase M4 family. Zn(2+) serves as cofactor.

It localises to the secreted. In terms of biological role, may play a role in the pathogenesis of cholera. Hap nicks and activates the A subunit of cholera enterotoxin and related enterotoxins. In Vibrio cholerae serotype O1 (strain ATCC 39315 / El Tor Inaba N16961), this protein is Hemagglutinin/proteinase (hap).